The chain runs to 247 residues: Neurotrophic factor BDNF precursor form (247 aa).

The first 18 residues, 1-18, serve as a signal peptide directing secretion; that stretch reads MTILFLTMVISYFGCMKA. The propeptide occupies 19 to 128; the sequence is APMKEANARG…AANMSMRVRR (110 aa). Asn-121 carries N-linked (GlcNAc...) asparagine glycosylation. 3 disulfide bridges follow: Cys-141–Cys-208, Cys-186–Cys-237, and Cys-196–Cys-239.

It belongs to the NGF-beta family. Monomers and homodimers. Binds to NTRK2/TRKB. Can form heterodimers with other neurotrophin family members, such as NTF3 and NTF4 (in vitro), but the physiological relevance of this is not clear. BDNF precursor form: interacts with the heterodimer formed by NGFR and SORCS2. Mature BDNF has much lower affinity for the heterodimer formed by NGFR and SORCS2. N-glycosylated and glycosulfated, contrary to mature BDNF. Post-translationally, mature BDNF is produced by proteolytic removal of the propeptide, catalyzed by a FURIN family member. In addition, the precursor form is proteolytically cleaved within the propeptide, but this is not an obligatory intermediate for the production of mature BDNF. Can be converted into mature BDNF by plasmin (PLG).

Its subcellular location is the secreted. Functionally, important signaling molecule that activates signaling cascades downstream of NTRK2. During development, promotes the survival and differentiation of selected neuronal populations of the peripheral and central nervous systems. Participates in axonal growth, pathfinding and in the modulation of dendritic growth and morphology. Major regulator of synaptic transmission and plasticity at adult synapses in many regions of the CNS. The versatility of BDNF is emphasized by its contribution to a range of adaptive neuronal responses including long-term potentiation (LTP), long-term depression (LTD), certain forms of short-term synaptic plasticity, as well as homeostatic regulation of intrinsic neuronal excitability. Its function is as follows. Important signaling molecule that activates signaling cascades downstream of NTRK2. Activates signaling cascades via the heterodimeric receptor formed by NGFR and SORCS2. Signaling via NGFR and SORCS2 plays a role in synaptic plasticity and long-term depression (LTD). Binding to NGFR and SORCS2 promotes neuronal apoptosis. Promotes neuronal growth cone collapse. The sequence is that of Neurotrophic factor BDNF precursor form (BDNF) from Equus caballus (Horse).